A 369-amino-acid chain; its full sequence is Probable methyltransferase TCM_000331 (369 aa).

S-adenosyl-L-homocysteine-binding residues include Y18, C60, N65, D98, L99, S137, and F138. The Mg(2+) site is built by N176, D261, F263, and N264.

This sequence belongs to the methyltransferase superfamily. Type-7 methyltransferase family. Requires Mg(2+) as cofactor.

The protein is Probable methyltransferase TCM_000331 of Theobroma cacao (Cacao).